Consider the following 211-residue polypeptide: Probable molybdenum cofactor guanylyltransferase (211 aa).

GTP-binding positions include 21-23, lysine 33, aspartate 84, and aspartate 116; that span reads LAG. A Mg(2+)-binding site is contributed by aspartate 116.

The protein belongs to the MobA family. The cofactor is Mg(2+).

Its subcellular location is the cytoplasm. The enzyme catalyses Mo-molybdopterin + GTP + H(+) = Mo-molybdopterin guanine dinucleotide + diphosphate. In terms of biological role, transfers a GMP moiety from GTP to Mo-molybdopterin (Mo-MPT) cofactor (Moco or molybdenum cofactor) to form Mo-molybdopterin guanine dinucleotide (Mo-MGD) cofactor. The protein is Probable molybdenum cofactor guanylyltransferase of Rhodopirellula baltica (strain DSM 10527 / NCIMB 13988 / SH1).